Here is a 651-residue protein sequence, read N- to C-terminus: Histone-lysine N-methyltransferase family member SUVH2 (651 aa).

Residues 1–28 (MSTLLPFPDLNLMPDSQSSTAGTTAGDT) are disordered. Positions 15–28 (DSQSSTAGTTAGDT) are enriched in low complexity. A YDG domain is found at 202 to 358 (DKHIVGPVTG…KFRLVRIEGQ (157 aa)). In terms of domain architecture, Pre-SET spans 434–492 (TGCECKLSCTDDCLCARKNGGEFAYDDNGHLLKGKHVVFECGEFCTCGPSCKSRVTQKG). Cys436, Cys438, Cys442, Cys446, Cys448, Cys474, Cys478, Cys480, and Cys484 together coordinate Zn(2+). Residues 495 to 638 (NRLEVFRSKE…PLAELSLDYG (144 aa)) enclose the SET domain.

This sequence belongs to the class V-like SAM-binding methyltransferase superfamily. Histone-lysine methyltransferase family. Suvar3-9 subfamily. As to quaternary structure, self-interacts. Interacts with DNA-directed RNA polymerase V subunit NRPE1 and with DRD1 and DMS3. Binds to MORC1/CRT1. Expressed at low levels in leaves stems and flowers.

It localises to the nucleus. Its subcellular location is the chromosome. The protein resides in the centromere. Functionally, histone methyltransferase family member that plays a central role in gene silencing. Together with MORC6 and SUVH9, regulates the silencing of some transposable elements (TEs). According to PubMed:15775980, it is required for normal methylation of 'Lys-9' and 'Lys-27' of histone H3, 'Lys-20' of H4, and cytosine, but PubMed:19043555 see no significant effect on histone methylation when the gene is mutated. According to PubMed:19043555, the protein does not bind S-adenosyl-L-methionine and lacks methyltransferase activity. Instead, it may function downstream of DRM2 in RNA-directed DNA methylation, binding to methylated DNA and recruiting DNA-directed RNA polymerase V to chromatin. The sequence is that of Histone-lysine N-methyltransferase family member SUVH2 (SUVH2) from Arabidopsis thaliana (Mouse-ear cress).